Consider the following 476-residue polypeptide: Eukaryotic translation initiation factor 3 subunit L (476 aa).

The PCI domain occupies 257 to 452 (DAIRMFSHIL…DLDYALENDL (196 aa)).

Belongs to the eIF-3 subunit L family. As to quaternary structure, component of the eukaryotic translation initiation factor 3 (eIF-3) complex.

Its subcellular location is the cytoplasm. Its function is as follows. Component of the eukaryotic translation initiation factor 3 (eIF-3) complex, which is involved in protein synthesis of a specialized repertoire of mRNAs and, together with other initiation factors, stimulates binding of mRNA and methionyl-tRNAi to the 40S ribosome. The eIF-3 complex specifically targets and initiates translation of a subset of mRNAs involved in cell proliferation. This chain is Eukaryotic translation initiation factor 3 subunit L, found in Aspergillus clavatus (strain ATCC 1007 / CBS 513.65 / DSM 816 / NCTC 3887 / NRRL 1 / QM 1276 / 107).